Reading from the N-terminus, the 141-residue chain is Nucleoside diphosphate kinase (141 aa).

Positions 11, 59, 87, 93, 104, and 114 each coordinate ATP. The active-site Pros-phosphohistidine intermediate is the His117.

It belongs to the NDK family. In terms of assembly, homotetramer. It depends on Mg(2+) as a cofactor.

It is found in the cytoplasm. It catalyses the reaction a 2'-deoxyribonucleoside 5'-diphosphate + ATP = a 2'-deoxyribonucleoside 5'-triphosphate + ADP. The catalysed reaction is a ribonucleoside 5'-diphosphate + ATP = a ribonucleoside 5'-triphosphate + ADP. Major role in the synthesis of nucleoside triphosphates other than ATP. The ATP gamma phosphate is transferred to the NDP beta phosphate via a ping-pong mechanism, using a phosphorylated active-site intermediate. The polypeptide is Nucleoside diphosphate kinase (Actinobacillus succinogenes (strain ATCC 55618 / DSM 22257 / CCUG 43843 / 130Z)).